The chain runs to 316 residues: Daunorubicin resistance ATP-binding protein DrrA3 (316 aa).

In terms of domain architecture, ABC transporter spans 6-236; sequence ITVDGAEKRY…TGGDRIDVVL (231 aa). 38 to 45 is a binding site for ATP; that stretch reads GPNGAGKT.

It belongs to the ABC transporter superfamily. Drug exporter-1 (DrugE1) (TC 3.A.1.105) family. As to quaternary structure, the complex is probably composed of two ATP-binding proteins (DrrA3) and two transmembrane proteins (DrrB3).

The protein localises to the cell membrane. It catalyses the reaction daunorubicin(in) + ATP + H2O = daunorubicin(out) + ADP + phosphate + H(+). Its function is as follows. Part of the ABC transporter complex DrrA3B3 involved in daunorubicin efflux. Responsible for energy coupling to the transport system. Confers self-resistance to daunorubicin, an antibiotic produced by S.coeruleorubidus. The efficiency of DrrA3B3 to export daunorubicin is probably lower than that of DrrA1B1 or DrrA2B2. This chain is Daunorubicin resistance ATP-binding protein DrrA3, found in Streptomyces coeruleorubidus.